The primary structure comprises 370 residues: Queuine tRNA-ribosyltransferase (370 aa).

The Proton acceptor role is filled by Asp-89. Substrate contacts are provided by residues 89–93 (DSGGF), Asp-143, and Gly-214. The RNA binding stretch occupies residues 245–251 (GVGKPED). Asp-264 functions as the Nucleophile in the catalytic mechanism. The RNA binding; important for wobble base 34 recognition stretch occupies residues 269–273 (TRNAR). The Zn(2+) site is built by Cys-302, Cys-304, Cys-307, and His-333.

This sequence belongs to the queuine tRNA-ribosyltransferase family. In terms of assembly, homodimer. Within each dimer, one monomer is responsible for RNA recognition and catalysis, while the other monomer binds to the replacement base PreQ1. Requires Zn(2+) as cofactor.

It catalyses the reaction 7-aminomethyl-7-carbaguanine + guanosine(34) in tRNA = 7-aminomethyl-7-carbaguanosine(34) in tRNA + guanine. It functions in the pathway tRNA modification; tRNA-queuosine biosynthesis. Its function is as follows. Catalyzes the base-exchange of a guanine (G) residue with the queuine precursor 7-aminomethyl-7-deazaguanine (PreQ1) at position 34 (anticodon wobble position) in tRNAs with GU(N) anticodons (tRNA-Asp, -Asn, -His and -Tyr). Catalysis occurs through a double-displacement mechanism. The nucleophile active site attacks the C1' of nucleotide 34 to detach the guanine base from the RNA, forming a covalent enzyme-RNA intermediate. The proton acceptor active site deprotonates the incoming PreQ1, allowing a nucleophilic attack on the C1' of the ribose to form the product. After dissociation, two additional enzymatic reactions on the tRNA convert PreQ1 to queuine (Q), resulting in the hypermodified nucleoside queuosine (7-(((4,5-cis-dihydroxy-2-cyclopenten-1-yl)amino)methyl)-7-deazaguanosine). This chain is Queuine tRNA-ribosyltransferase, found in Buchnera aphidicola subsp. Acyrthosiphon pisum (strain APS) (Acyrthosiphon pisum symbiotic bacterium).